Here is a 361-residue protein sequence, read N- to C-terminus: Phosphate acyltransferase (361 aa).

The tract at residues 342-361 is disordered; sequence ADGAAAEQGPTPRRTAPRQT.

This sequence belongs to the PlsX family. Homodimer. Probably interacts with PlsY.

It is found in the cytoplasm. It carries out the reaction a fatty acyl-[ACP] + phosphate = an acyl phosphate + holo-[ACP]. The protein operates within lipid metabolism; phospholipid metabolism. Its function is as follows. Catalyzes the reversible formation of acyl-phosphate (acyl-PO(4)) from acyl-[acyl-carrier-protein] (acyl-ACP). This enzyme utilizes acyl-ACP as fatty acyl donor, but not acyl-CoA. This is Phosphate acyltransferase from Anaeromyxobacter sp. (strain K).